The sequence spans 102 residues: NADH-quinone oxidoreductase subunit K (102 aa).

3 consecutive transmembrane segments (helical) span residues 5–25 (LAHY…GIFV), 30–50 (IIVI…NLVA), and 62–82 (IFAM…LAIL).

The protein belongs to the complex I subunit 4L family. As to quaternary structure, NDH-1 is composed of 14 different subunits. Subunits NuoA, H, J, K, L, M, N constitute the membrane sector of the complex.

It is found in the cell inner membrane. It carries out the reaction a quinone + NADH + 5 H(+)(in) = a quinol + NAD(+) + 4 H(+)(out). NDH-1 shuttles electrons from NADH, via FMN and iron-sulfur (Fe-S) centers, to quinones in the respiratory chain. The immediate electron acceptor for the enzyme in this species is believed to be ubiquinone. Couples the redox reaction to proton translocation (for every two electrons transferred, four hydrogen ions are translocated across the cytoplasmic membrane), and thus conserves the redox energy in a proton gradient. The polypeptide is NADH-quinone oxidoreductase subunit K (Phenylobacterium zucineum (strain HLK1)).